The sequence spans 281 residues: Pantothenate synthetase (281 aa).

30 to 37 (MGYLHDGH) provides a ligand contact to ATP. Catalysis depends on His37, which acts as the Proton donor. Residue Gln61 participates in (R)-pantoate binding. A beta-alanine-binding site is contributed by Gln61. 147-150 (GEKD) lines the ATP pocket. Position 153 (Gln153) interacts with (R)-pantoate. ATP is bound by residues Ile176 and 184 to 187 (KSSR).

It belongs to the pantothenate synthetase family. Homodimer.

It is found in the cytoplasm. The catalysed reaction is (R)-pantoate + beta-alanine + ATP = (R)-pantothenate + AMP + diphosphate + H(+). It functions in the pathway cofactor biosynthesis; (R)-pantothenate biosynthesis; (R)-pantothenate from (R)-pantoate and beta-alanine: step 1/1. Its function is as follows. Catalyzes the condensation of pantoate with beta-alanine in an ATP-dependent reaction via a pantoyl-adenylate intermediate. This is Pantothenate synthetase from Clostridium acetobutylicum (strain ATCC 824 / DSM 792 / JCM 1419 / IAM 19013 / LMG 5710 / NBRC 13948 / NRRL B-527 / VKM B-1787 / 2291 / W).